A 905-amino-acid polypeptide reads, in one-letter code: Core protein VP3 (905 aa).

It belongs to the orbivirus VP3 family.

The protein resides in the virion. The VP3 protein is one of the five proteins (with VP1, VP4, VP6 and VP7) which form the inner capsid of the virus. In African horse sickness virus 6 (AHSV-6), this protein is Core protein VP3 (Segment-3).